The primary structure comprises 184 residues: Lipoprotein signal peptidase (184 aa).

Transmembrane regions (helical) follow at residues 23 to 43 (FLYY…FQVF), 88 to 108 (PGLV…FLVF), and 110 to 130 (TSYN…GNFF). Active-site residues include aspartate 142 and aspartate 157. The chain crosses the membrane as a helical span at residues 156–176 (ADCCITFSFIGLFLSFLIQFF).

Belongs to the peptidase A8 family.

Its subcellular location is the cell membrane. The catalysed reaction is Release of signal peptides from bacterial membrane prolipoproteins. Hydrolyzes -Xaa-Yaa-Zaa-|-(S,diacylglyceryl)Cys-, in which Xaa is hydrophobic (preferably Leu), and Yaa (Ala or Ser) and Zaa (Gly or Ala) have small, neutral side chains.. It participates in protein modification; lipoprotein biosynthesis (signal peptide cleavage). Functionally, this protein specifically catalyzes the removal of signal peptides from prolipoproteins. This is Lipoprotein signal peptidase from Mycoplasma pneumoniae (strain ATCC 29342 / M129 / Subtype 1) (Mycoplasmoides pneumoniae).